We begin with the raw amino-acid sequence, 202 residues long: Oxopyrrolidines biosynthesis cluster protein O (202 aa).

In terms of biological role, part of the gene cluster that mediates the biosynthesis of oxopyrrolidines, polyketide-amino acid hybrid compounds with feature structures of tetramic acid. Does not seem to play a role in oxopyrrolidines A and B biosynthesis. The protein is Oxopyrrolidines biosynthesis cluster protein O of Penicillium oxalicum (strain 114-2 / CGMCC 5302) (Penicillium decumbens).